A 547-amino-acid chain; its full sequence is CTP synthase (547 aa).

The segment at 1-265 is amidoligase domain; it reads MARFIFITGG…DQAVLDAFGI (265 aa). Serine 13 is a binding site for CTP. Serine 13 provides a ligand contact to UTP. ATP-binding positions include 14-19 and aspartate 71; that span reads SLGKGL. Mg(2+) contacts are provided by aspartate 71 and glutamate 139. Residues 146 to 148, 186 to 191, and lysine 222 each bind CTP; these read DIE and KTKPTQ. UTP is bound by residues 186–191 and lysine 222; that span reads KTKPTQ. In terms of domain architecture, Glutamine amidotransferase type-1 spans 291 to 546; that stretch reads KVAIVGKYTQ…VRAAKENSRL (256 aa). Glycine 353 serves as a coordination point for L-glutamine. Catalysis depends on cysteine 380, which acts as the Nucleophile; for glutamine hydrolysis. L-glutamine-binding positions include 381–384, glutamate 404, and arginine 474; that span reads LGMQ. Active-site residues include histidine 519 and glutamate 521.

The protein belongs to the CTP synthase family. As to quaternary structure, homotetramer.

It carries out the reaction UTP + L-glutamine + ATP + H2O = CTP + L-glutamate + ADP + phosphate + 2 H(+). The enzyme catalyses L-glutamine + H2O = L-glutamate + NH4(+). The catalysed reaction is UTP + NH4(+) + ATP = CTP + ADP + phosphate + 2 H(+). It functions in the pathway pyrimidine metabolism; CTP biosynthesis via de novo pathway; CTP from UDP: step 2/2. Allosterically activated by GTP, when glutamine is the substrate; GTP has no effect on the reaction when ammonia is the substrate. The allosteric effector GTP functions by stabilizing the protein conformation that binds the tetrahedral intermediate(s) formed during glutamine hydrolysis. Inhibited by the product CTP, via allosteric rather than competitive inhibition. Its function is as follows. Catalyzes the ATP-dependent amination of UTP to CTP with either L-glutamine or ammonia as the source of nitrogen. Regulates intracellular CTP levels through interactions with the four ribonucleotide triphosphates. In Jannaschia sp. (strain CCS1), this protein is CTP synthase.